The primary structure comprises 364 residues: Aminomethyltransferase (364 aa).

The protein belongs to the GcvT family. The glycine cleavage system is composed of four proteins: P, T, L and H.

It carries out the reaction N(6)-[(R)-S(8)-aminomethyldihydrolipoyl]-L-lysyl-[protein] + (6S)-5,6,7,8-tetrahydrofolate = N(6)-[(R)-dihydrolipoyl]-L-lysyl-[protein] + (6R)-5,10-methylene-5,6,7,8-tetrahydrofolate + NH4(+). In terms of biological role, the glycine cleavage system catalyzes the degradation of glycine. In Shewanella sediminis (strain HAW-EB3), this protein is Aminomethyltransferase.